The sequence spans 278 residues: Short-chain dehydrogenase/reductase eupG (278 aa).

NADP(+) is bound by residues leucine 19, aspartate 71, and asparagine 98. Serine 155 serves as the catalytic Proton donor. NADP(+) is bound by residues tyrosine 188, lysine 192, and threonine 223. Catalysis depends on tyrosine 188, which acts as the Proton acceptor. The Lowers pKa of active site Tyr role is filled by lysine 192.

It belongs to the short-chain dehydrogenases/reductases (SDR) family.

The protein operates within secondary metabolite biosynthesis; terpenoid biosynthesis. In terms of biological role, short-chain dehydrogenase/reductase; part of the gene cluster that mediates the biosynthesis of eupenifeldin, a bistropolone meroterpenoid that acts as an antitumor agent. The first step of eupenifeldin biosynthesis is the biosynthesis of 3-methylorcinaldehyde performed by the non-reducing polyketide synthase eupA. Oxidative dearomatization of 3-methylorcinaldehyde likely catalyzed by the FAD-dependent monooxygenase eupB is followed by oxidative ring expansion by the 2-oxoglutarate-dependent dioxygenase eupC to provide the first tropolone metabolite, tropolone stipitaldehyde. In parallel, generation of sesquiterpene alpha-humulene from farnesylpyrophosphate (FPP) is catalyzed by the terpene cyclase eupE. The cytochrome P450 monooxygenase eupD then hydroxylates humulene to humulenol. The putative Diels-Alderase eupF probably catalyzes the formation of the tropolone-humulene skeleton by linking humulenol and the polyketide moiety. The short-chain dehydrogenase/reductase eupG and the flavin-dependent monooxygenase eupH are also essential for eupenifeldin biosynthesis and are likely the additional decorating enzymes of the tropolone-humulene skeleton to produce final eupenifeldin or derivatives. This Phoma sp protein is Short-chain dehydrogenase/reductase eupG.